Reading from the N-terminus, the 218-residue chain is Transaldolase (218 aa).

Residue K83 is the Schiff-base intermediate with substrate of the active site.

It belongs to the transaldolase family. Type 3B subfamily.

The protein resides in the cytoplasm. The catalysed reaction is D-sedoheptulose 7-phosphate + D-glyceraldehyde 3-phosphate = D-erythrose 4-phosphate + beta-D-fructose 6-phosphate. It functions in the pathway carbohydrate degradation; pentose phosphate pathway; D-glyceraldehyde 3-phosphate and beta-D-fructose 6-phosphate from D-ribose 5-phosphate and D-xylulose 5-phosphate (non-oxidative stage): step 2/3. In terms of biological role, transaldolase is important for the balance of metabolites in the pentose-phosphate pathway. Does not show fructose-6-P aldolase activity. In Thermotoga maritima (strain ATCC 43589 / DSM 3109 / JCM 10099 / NBRC 100826 / MSB8), this protein is Transaldolase (tal).